A 221-amino-acid chain; its full sequence is Putative hemin import ATP-binding protein HrtA (221 aa).

In terms of domain architecture, ABC transporter spans 3–221; that stretch reads LVVKDIVKNF…IELEDGKITD (219 aa). Residue 39–46 coordinates ATP; that stretch reads GASGSGKT.

This sequence belongs to the ABC transporter superfamily. HrtA family. As to quaternary structure, the complex is composed of two ATP-binding proteins (HrtA), two transmembrane proteins (HrtB) and a solute-binding protein.

It is found in the cell membrane. Its function is as follows. Part of the ABC transporter complex hrt involved in hemin import. Responsible for energy coupling to the transport system. The chain is Putative hemin import ATP-binding protein HrtA (hrtA) from Staphylococcus aureus (strain MRSA252).